The chain runs to 343 residues: E3 ubiquitin-protein ligase SP1 (343 aa).

Residues 1 to 21 (MIPWGGVTCCLSAAALYLLGR) form a helical membrane-spanning segment. Residues 22 to 222 (SSGRDAEVLE…LISNLGKWSR (201 aa)) lie on the Chloroplast intermembrane side of the membrane. Residues 223–244 (LYKYASMGFTVLGVFLITKHVI) traverse the membrane as a helical segment. At 245–343 (DSVLERRRRR…IDLAVKTYRH (99 aa)) the chain is on the cytoplasmic side. The RING-type zinc-finger motif lies at 296–331 (CVICLEQEYNAVFVPCGHMCCCTACSSHLTSCPLCR).

As to quaternary structure, interacts with TOC33, TOC75-3 and TOC159. Post-translationally, auto-ubiquitinated.

The protein resides in the plastid. It localises to the chloroplast outer membrane. The enzyme catalyses S-ubiquitinyl-[E2 ubiquitin-conjugating enzyme]-L-cysteine + [acceptor protein]-L-lysine = [E2 ubiquitin-conjugating enzyme]-L-cysteine + N(6)-ubiquitinyl-[acceptor protein]-L-lysine.. It functions in the pathway protein modification; protein ubiquitination. In terms of biological role, E3 ubiquitin-protein ligase involved in the regulation of protein import in the chloroplast. Associates with TOC complexes and mediates ubiquitination of TOC components, promoting their degradation via the ubiquitin-proteasome system (UPS). Plays a role in the reorganization of the TOC machinery. Involved in a mechanism that regulates plastid biogenesis via UPS. Promotes stress tolerance by depleting the chloroplast protein import apparatus, which limits photosystem assembly and the potential for reactive oxygen species (ROS) formation. May act as negative regulator of programmed cell death (PCD) during biotic stress. The protein is E3 ubiquitin-protein ligase SP1 of Arabidopsis thaliana (Mouse-ear cress).